We begin with the raw amino-acid sequence, 601 residues long: Elongation factor 4 (601 aa).

The region spanning 6-188 is the tr-type G domain; sequence NYIRNFSIVA…AIVTQLPSPR (183 aa). Residues 18-23 and 135-138 contribute to the GTP site; these read DHGKST and NKVD.

The protein belongs to the TRAFAC class translation factor GTPase superfamily. Classic translation factor GTPase family. LepA subfamily.

It localises to the cell inner membrane. The enzyme catalyses GTP + H2O = GDP + phosphate + H(+). Functionally, required for accurate and efficient protein synthesis under certain stress conditions. May act as a fidelity factor of the translation reaction, by catalyzing a one-codon backward translocation of tRNAs on improperly translocated ribosomes. Back-translocation proceeds from a post-translocation (POST) complex to a pre-translocation (PRE) complex, thus giving elongation factor G a second chance to translocate the tRNAs correctly. Binds to ribosomes in a GTP-dependent manner. In Bartonella henselae (strain ATCC 49882 / DSM 28221 / CCUG 30454 / Houston 1) (Rochalimaea henselae), this protein is Elongation factor 4.